Reading from the N-terminus, the 78-residue chain is Dihydrofolate reductase type 2 (78 aa).

NADP(+)-binding positions include lysine 32 and 66 to 69; that span reads VQIY. Isoleucine 68 lines the substrate pocket.

In terms of assembly, homotetramer.

The catalysed reaction is (6S)-5,6,7,8-tetrahydrofolate + NADP(+) = 7,8-dihydrofolate + NADPH + H(+). It functions in the pathway cofactor biosynthesis; tetrahydrofolate biosynthesis; 5,6,7,8-tetrahydrofolate from 7,8-dihydrofolate: step 1/1. In terms of biological role, key enzyme in folate metabolism. Catalyzes an essential reaction for de novo glycine and purine synthesis, and for DNA precursor synthesis. The sequence is that of Dihydrofolate reductase type 2 from Escherichia coli.